Reading from the N-terminus, the 512-residue chain is Probable pectinesterase/pectinesterase inhibitor 54 (512 aa).

A signal peptide spans 1–24 (MGVIDMVLFWVLLVNALLIVDASS). The segment at 29–193 (FAYQNEMQRH…SRLVSNSLTL (165 aa)) is pectinesterase inhibitor 54. 2 N-linked (GlcNAc...) asparagine glycosylation sites follow: N71 and N131. Residues 229–496 (HVVVAKDGSG…FSVVKRRNGE (268 aa)) are pectinesterase 54. Q302 is a substrate binding site. D325 functions as the Proton donor; for pectinesterase activity in the catalytic mechanism. C339 and C359 are oxidised to a cystine. The active-site Nucleophile; for pectinesterase activity is D346. Substrate is bound by residues R415 and W417.

In the N-terminal section; belongs to the PMEI family. The protein in the C-terminal section; belongs to the pectinesterase family. As to expression, expressed in siliques.

The protein localises to the secreted. The protein resides in the cell wall. The catalysed reaction is [(1-&gt;4)-alpha-D-galacturonosyl methyl ester](n) + n H2O = [(1-&gt;4)-alpha-D-galacturonosyl](n) + n methanol + n H(+). The protein operates within glycan metabolism; pectin degradation; 2-dehydro-3-deoxy-D-gluconate from pectin: step 1/5. In terms of biological role, acts in the modification of cell walls via demethylesterification of cell wall pectin. The sequence is that of Probable pectinesterase/pectinesterase inhibitor 54 (PME54) from Arabidopsis thaliana (Mouse-ear cress).